Reading from the N-terminus, the 608-residue chain is Dolichyl-diphosphooligosaccharide--protein glycosyltransferase subunit 1 (608 aa).

The N-terminal stretch at 1–25 is a signal peptide; it reads MESPVALLLLLLLCLGALAPTPGSA. Residues 26-440 lie on the Lumenal side of the membrane; sequence SSEAPPLVNE…FNKVLMLQEP (415 aa). N6-acetyllysine is present on Lys188. Residue Asn300 is glycosylated (N-linked (GlcNAc...) asparagine). Residues 441 to 458 traverse the membrane as a helical segment; that stretch reads LLVVAAFYILFFTVIIYV. Over 459 to 608 the chain is Cytoplasmic; the sequence is RLDFSITKDP…TKIDHILDAL (150 aa). Lys539 carries the post-translational modification N6-acetyllysine; alternate. Lys539 participates in a covalent cross-link: Glycyl lysine isopeptide (Lys-Gly) (interchain with G-Cter in SUMO2); alternate.

This sequence belongs to the OST1 family. In terms of assembly, component of the oligosaccharyltransferase (OST) complex. OST exists in two different complex forms which contain common core subunits RPN1, RPN2, OST48, OST4, DAD1 and TMEM258, either STT3A or STT3B as catalytic subunits, and form-specific accessory subunits. STT3A complex assembly occurs through the formation of 3 subcomplexes. Subcomplex 1 contains RPN1 and TMEM258, subcomplex 2 contains the STT3A-specific subunits STT3A, DC2/OSTC, and KCP2 as well as the core subunit OST4, and subcomplex 3 contains RPN2, DAD1, and OST48. The STT3A complex can form stable complexes with the Sec61 complex or with both the Sec61 and TRAP complexes. Interacts with TMEM35A/NACHO. Post-translationally, ubiquitinated by the ECS(ASB11) complex. Ubiquitinated by RNF128, leading to degradation in a proteasome/lysosome-dependent manner. In terms of processing, ufmylated by UFL1 in response to endoplasmic reticulum stress, promoting reticulophagy of endoplasmic reticulum sheets.

Its subcellular location is the endoplasmic reticulum membrane. It functions in the pathway protein modification; protein glycosylation. Subunit of the oligosaccharyl transferase (OST) complex that catalyzes the initial transfer of a defined glycan (Glc(3)Man(9)GlcNAc(2) in eukaryotes) from the lipid carrier dolichol-pyrophosphate to an asparagine residue within an Asn-X-Ser/Thr consensus motif in nascent polypeptide chains, the first step in protein N-glycosylation. N-glycosylation occurs cotranslationally and the complex associates with the Sec61 complex at the channel-forming translocon complex that mediates protein translocation across the endoplasmic reticulum (ER). All subunits are required for a maximal enzyme activity. This chain is Dolichyl-diphosphooligosaccharide--protein glycosyltransferase subunit 1, found in Mus musculus (Mouse).